We begin with the raw amino-acid sequence, 367 residues long: Pepsin A (367 aa).

Positions 1–42 (SIHRVPLKKGKSLRKQLKDHGLLEDFLKKHPYNPASKYHPVL) are cleaved as a propeptide — activation peptide. The Peptidase A1 domain occupies 59-364 (YYGTISIGTP…DRANNKVGLS (306 aa)). The active site involves D77. C90 and C95 are joined by a disulfide. N113 carries an N-linked (GlcNAc...) asparagine glycan. A disulfide bridge connects residues C251 and C255. D260 is an active-site residue. C290 and C323 are joined by a disulfide.

The protein belongs to the peptidase A1 family.

It catalyses the reaction Preferential cleavage: hydrophobic, preferably aromatic, residues in P1 and P1' positions. Cleaves 1-Phe-|-Val-2, 4-Gln-|-His-5, 13-Glu-|-Ala-14, 14-Ala-|-Leu-15, 15-Leu-|-Tyr-16, 16-Tyr-|-Leu-17, 23-Gly-|-Phe-24, 24-Phe-|-Phe-25 and 25-Phe-|-Tyr-26 bonds in the B chain of insulin.. Shows particularly broad specificity; although bonds involving phenylalanine and leucine are preferred, many others are also cleaved to some extent. This chain is Pepsin A (PGA), found in Gallus gallus (Chicken).